Consider the following 585-residue polypeptide: Potassium-transporting ATPase potassium-binding subunit (585 aa).

The next 12 membrane-spanning stretches (helical) occupy residues 25–45 (IIIF…SFYI), 84–104 (YFIN…LVIM), 152–172 (FVIT…SMAF), 194–214 (IFDL…LAGV), 275–295 (LEFV…GIVF), 307–327 (VIMF…YVGV), 345–365 (AIGV…STGA), 368–388 (GALV…LLLN), 397–417 (GVLN…LMVG), 437–457 (LSLV…LMIP), 502–522 (LDGV…LVIA), and 547–567 (LLLI…IIVL).

It belongs to the KdpA family. As to quaternary structure, the system is composed of three essential subunits: KdpA, KdpB and KdpC.

It localises to the cell membrane. In terms of biological role, part of the high-affinity ATP-driven potassium transport (or Kdp) system, which catalyzes the hydrolysis of ATP coupled with the electrogenic transport of potassium into the cytoplasm. This subunit binds the extracellular potassium ions and delivers the ions to the membrane domain of KdpB through an intramembrane tunnel. The polypeptide is Potassium-transporting ATPase potassium-binding subunit (Thermoplasma volcanium (strain ATCC 51530 / DSM 4299 / JCM 9571 / NBRC 15438 / GSS1)).